The primary structure comprises 249 residues: uncharacterized protein (249 aa).

This is an uncharacterized protein from Escherichia coli O6:H1 (strain CFT073 / ATCC 700928 / UPEC).